The following is a 292-amino-acid chain: Phosphoribosylaminoimidazole-succinocarboxamide synthase (292 aa).

The protein belongs to the SAICAR synthetase family.

It catalyses the reaction 5-amino-1-(5-phospho-D-ribosyl)imidazole-4-carboxylate + L-aspartate + ATP = (2S)-2-[5-amino-1-(5-phospho-beta-D-ribosyl)imidazole-4-carboxamido]succinate + ADP + phosphate + 2 H(+). It participates in purine metabolism; IMP biosynthesis via de novo pathway; 5-amino-1-(5-phospho-D-ribosyl)imidazole-4-carboxamide from 5-amino-1-(5-phospho-D-ribosyl)imidazole-4-carboxylate: step 1/2. The sequence is that of Phosphoribosylaminoimidazole-succinocarboxamide synthase from Elusimicrobium minutum (strain Pei191).